The following is an 884-amino-acid chain: Chondroitin sulfate synthase 3 (884 aa).

The Cytoplasmic portion of the chain corresponds to 1 to 7 (MAVRSRR). Residues 8 to 28 (PWVSVALGLVLGFTAASWLIA) form a helical; Signal-anchor for type II membrane protein membrane-spanning segment. Residues 29–884 (PRVAELSEKR…LGVRDNRTLS (856 aa)) lie on the Lumenal side of the membrane. The disordered stretch occupies residues 47–164 (YYGRSATGPR…NGSGDGGAAV (118 aa)). Low complexity-rich tracts occupy residues 60-69 (QQLLPQPQSR) and 84-96 (PGPQQPEAAPGGP). Residues N155 and N281 are each glycosylated (N-linked (GlcNAc...) asparagine). Residues 437 to 456 (SNSEVSKEDQQLGRTPSFNH) are disordered. N-linked (GlcNAc...) asparagine glycosylation occurs at N712. Residues D722 and H836 each coordinate a divalent metal cation. N880 is a glycosylation site (N-linked (GlcNAc...) asparagine).

The protein belongs to the chondroitin N-acetylgalactosaminyltransferase family. Co(2+) is required as a cofactor. The cofactor is Mn(2+). Requires Cd(2+) as cofactor.

Its subcellular location is the golgi apparatus. The protein resides in the golgi stack membrane. It carries out the reaction 3-O-(beta-D-GlcA-(1-&gt;3)-beta-D-GalNAc-(1-&gt;4)-beta-D-GlcA-(1-&gt;3)-beta-D-Gal-(1-&gt;3)-beta-D-Gal-(1-&gt;4)-beta-D-Xyl)-L-seryl-[protein] + UDP-N-acetyl-alpha-D-galactosamine = 3-O-(beta-D-GalNAc-(1-&gt;4)-beta-D-GlcA-(1-&gt;3)-beta-D-GalNAc-(1-&gt;4)-beta-D-GlcA-(1-&gt;3)-beta-D-Gal-(1-&gt;3)-beta-D-Gal-(1-&gt;4)-beta-D-Xyl)-L-seryl-[protein] + UDP + H(+). The enzyme catalyses 3-O-{beta-D-GlcA-(1-&gt;3)-[beta-D-GalNAc-(1-&gt;4)-beta-D-GlcA-(1-&gt;3)](n)-beta-D-GalNAc-(1-&gt;4)-beta-D-GlcA-(1-&gt;3)-beta-D-Gal-(1-&gt;3)-beta-D-Gal-(1-&gt;4)-beta-D-Xyl}-L-seryl-[protein] + UDP-N-acetyl-alpha-D-galactosamine = 3-O-{[beta-D-GalNAc-(1-&gt;4)-beta-D-GlcA-(1-&gt;3)](n+1)-beta-D-GalNAc-(1-&gt;4)-beta-D-GlcA-(1-&gt;3)-beta-D-Gal-(1-&gt;3)-beta-D-Gal-(1-&gt;4)-beta-D-Xyl}-L-seryl-[protein] + UDP + H(+). The catalysed reaction is 3-O-(beta-D-GalNAc-(1-&gt;4)-beta-D-GlcA-(1-&gt;3)-beta-D-Gal-(1-&gt;3)-beta-D-Gal-(1-&gt;4)-beta-D-Xyl)-L-seryl-[protein] + UDP-alpha-D-glucuronate = 3-O-(beta-D-GlcA-(1-&gt;3)-beta-D-GalNAc-(1-&gt;4)-beta-D-GlcA-(1-&gt;3)-beta-D-Gal-(1-&gt;3)-beta-D-Gal-(1-&gt;4)-beta-D-Xyl)-L-seryl-[protein] + UDP + H(+). It catalyses the reaction 3-O-{[beta-D-GalNAc-(1-&gt;4)-beta-D-GlcA-(1-&gt;3)](n)-beta-D-GalNAc-(1-&gt;4)-beta-D-GlcA-(1-&gt;3)-beta-D-Gal-(1-&gt;3)-beta-D-Gal-(1-&gt;4)-beta-D-Xyl}-L-seryl-[protein] + UDP-alpha-D-glucuronate = 3-O-{beta-D-GlcA-(1-&gt;3)-[beta-D-GalNAc-(1-&gt;4)-beta-D-GlcA-(1-&gt;3)](n)-beta-D-GalNAc-(1-&gt;4)-beta-D-GlcA-(1-&gt;3)-beta-D-Gal-(1-&gt;3)-beta-D-Gal-(1-&gt;4)-beta-D-Xyl}-L-seryl-[protein] + UDP + H(+). In terms of biological role, has both beta-1,3-glucuronic acid and beta-1,4-N-acetylgalactosamine transferase activity. Transfers glucuronic acid (GlcUA) from UDP-GlcUA and N-acetylgalactosamine (GalNAc) from UDP-GalNAc to the non-reducing end of the elongating chondroitin polymer. Specific activity is much reduced compared to CHSY1. The polypeptide is Chondroitin sulfate synthase 3 (Chsy3) (Mus musculus (Mouse)).